The chain runs to 259 residues: Isoprenyl transferase (259 aa).

Asp33 is a catalytic residue. Position 33 (Asp33) interacts with Mg(2+). Substrate is bound by residues 34–37 (GNRR), Trp38, His51, and 79–81 (STE). Asn82 functions as the Proton acceptor in the catalytic mechanism. Substrate-binding positions include Arg86, Arg208, and 214–216 (RMS). Glu227 contacts Mg(2+).

Belongs to the UPP synthase family. In terms of assembly, homodimer. Requires Mg(2+) as cofactor.

Functionally, catalyzes the condensation of isopentenyl diphosphate (IPP) with allylic pyrophosphates generating different type of terpenoids. This is Isoprenyl transferase from Streptomyces fradiae (Streptomyces roseoflavus).